We begin with the raw amino-acid sequence, 448 residues long: Nucleoprotein (448 aa).

Positions 1-55 (MSFTPGKQSSSRASSGNRSGNGILKWADQSDQSRNVQTRGRRAQPKQTATSQQPS) are disordered. A compositionally biased stretch (low complexity) spans 9-22 (SSSRASSGNRSGNG). Composition is skewed to polar residues over residues 29 to 38 (QSDQSRNVQT) and 45 to 55 (PKQTATSQQPS). Positions 52–194 (QQPSGGNVVP…GYYIEGSGRS (143 aa)) are RNA-binding. In terms of domain architecture, CoV N NTD spans 61 to 190 (PYYSWFSGIT…VLPQGYYIEG (130 aa)). Residues arginine 106, arginine 122, and arginine 164 each coordinate RNA. Disordered regions lie at residues 157–231 (TPAD…VTPD), 266–298 (ILNKPRQKRSPNKQCTVQQCFGKRGPNQNFGGG), and 385–448 (GMMN…TSEI). Serine 167 bears the Phosphoserine; by host mark. Threonine 174 bears the Phosphothreonine; by host mark. Position 191 is a phosphoserine; by host (serine 191). The segment covering 193–214 (RSAPNSRSTSRASSRASSAGSR) has biased composition (low complexity). The region spanning 259–384 (AKEIRQKILN…ENLNAYQQQD (126 aa)) is the CoV N CTD domain. Positions 266–276 (ILNKPRQKRSP) are enriched in basic residues. Residues 266–384 (ILNKPRQKRS…ENLNAYQQQD (119 aa)) form a dimerization region. At serine 390 the chain carries Phosphoserine; by host. Over residues 399–409 (QKNGQGENDNI) the composition is skewed to polar residues. A compositionally biased stretch (basic and acidic residues) spans 422 to 439 (KSRELTAEDISLLKKMDE). At serine 423 the chain carries Phosphoserine; by host. Phosphothreonine; by host is present on threonine 427.

The protein belongs to the betacoronavirus nucleocapsid protein family. Homooligomer. Both monomeric and oligomeric forms interact with RNA. Interacts with protein M. Interacts with NSP3; this interaction serves to tether the genome to the newly translated replicase-transcriptase complex at a very early stage of infection. In terms of processing, ADP-ribosylated. The ADP-ribosylation is retained in the virion during infection. Phosphorylated on serine and threonine residues.

Its subcellular location is the virion. It localises to the host endoplasmic reticulum-Golgi intermediate compartment. It is found in the host Golgi apparatus. Packages the positive strand viral genome RNA into a helical ribonucleocapsid (RNP) and plays a fundamental role during virion assembly through its interactions with the viral genome and membrane protein M. Plays an important role in enhancing the efficiency of subgenomic viral RNA transcription as well as viral replication. The polypeptide is Nucleoprotein (Bovine coronavirus (strain LY-138) (BCoV)).